The chain runs to 125 residues: Small ribosomal subunit protein uS12c (125 aa).

The interval 1 to 23 is disordered; the sequence is MPTLEHLTRSPRKKIKRKTKSPA. Basic residues predominate over residues 9–20; that stretch reads RSPRKKIKRKTK.

Belongs to the universal ribosomal protein uS12 family. In terms of assembly, part of the 30S ribosomal subunit.

The protein resides in the plastid. It localises to the chloroplast. Functionally, with S4 and S5 plays an important role in translational accuracy. Located at the interface of the 30S and 50S subunits. The sequence is that of Small ribosomal subunit protein uS12c (rps12) from Euglena gracilis.